We begin with the raw amino-acid sequence, 719 residues long: Glutathionylspermidine synthase (719 aa).

The region spanning 54–200 (CLPLSSFERK…TESGEVELLD (147 aa)) is the Peptidase C51 domain. A glutathione-binding site is contributed by R350. ATP is bound at residue 350–352 (RFD). Mg(2+) contacts are provided by D352, E364, and N366. Residue S369 coordinates glutathione. Residue E432 coordinates spermidine. Glutathione-binding residues include E433 and T501. Residues K544, K579, G586, Q653, and 689-691 (KIT) contribute to the ATP site.

This sequence in the C-terminal section; belongs to the glutathionylspermidine synthase preATP-grasp family. It depends on Mg(2+) as a cofactor. The N-terminus is blocked.

The catalysed reaction is spermidine + glutathione + ATP = glutathionylspermidine + ADP + phosphate + H(+). In terms of biological role, conjugates glutathione (gamma-Glu-Cys-Gly) and spermidine to form glutathionylspermidine in the biosynthesis trypanothione (N(1),N(8)-bis(glutathionyl)spermidine), which is involved in maintaining intracellular thiol redox and in defense against oxidants. The protein is Glutathionylspermidine synthase (GSP) of Crithidia fasciculata.